Reading from the N-terminus, the 270-residue chain is Chlorophyll a-b binding protein 7, chloroplastic (270 aa).

Residues 1 to 42 (MASACASSTIAAVAFSSPSSRRNGSIVGTTKASFLGGRRLRV) constitute a chloroplast transit peptide. Trp-68 lines the chlorophyll b pocket. Chlorophyll a contacts are provided by Phe-88, Glu-107, and His-110. Arg-112 contributes to the chlorophyll b binding site. A helical membrane pass occupies residues 113 to 133 (WAMLGAAGIFIPELLTKIGIL). Gln-144 contributes to the chlorophyll a binding site. Residues 146–166 (YFTDTTTLFIVELVLIGWAEG) form a helical membrane-spanning segment. Chlorophyll b is bound by residues Ile-155, Glu-165, and Arg-168. Chlorophyll a-binding residues include Lys-221, Glu-222, Asn-225, Arg-227, Gln-239, and His-254. A helical transmembrane segment spans residues 228-248 (LAMLAVMGAWFQHIYTGTGPI).

Belongs to the light-harvesting chlorophyll a/b-binding (LHC) protein family. In terms of assembly, the LHC complex consists of chlorophyll a-b binding proteins. The cofactor is Binds at least 14 chlorophylls (8 Chl-a and 6 Chl-b) and carotenoids such as lutein and neoxanthin.. In terms of processing, photoregulated by reversible phosphorylation of its threonine residues.

The protein resides in the plastid. It is found in the chloroplast thylakoid membrane. Its function is as follows. The light-harvesting complex (LHC) functions as a light receptor, it captures and delivers excitation energy to photosystems with which it is closely associated. The polypeptide is Chlorophyll a-b binding protein 7, chloroplastic (CAB7) (Solanum lycopersicum (Tomato)).